The sequence spans 486 residues: Histamine H1 receptor (486 aa).

At 1–29 the chain is on the extracellular side; that stretch reads MSFANTSSTFEDKMCEGNRTAMASPQLLP. Asparagine 5 and asparagine 18 each carry an N-linked (GlcNAc...) asparagine glycan. Residues 30 to 50 form a helical membrane-spanning segment; sequence LVVVLSSISLVTVGLNLLVLY. Residues 51–64 lie on the Cytoplasmic side of the membrane; sequence AVHSERKLHTVGNL. Residues 65–89 form a helical membrane-spanning segment; it reads YIVSLSVADLIVGAVVMPMNILYLI. Residues 90–97 are Extracellular-facing; it reads MTKWSLGR. A helical membrane pass occupies residues 98–123; it reads PLCLFWLSMDYVASTASIFSVFILCI. Cysteine 100 and cysteine 180 are joined by a disulfide. Histamine-binding residues include aspartate 107 and threonine 112. The interval 107–112 is important for agonist binding; the sequence is DYVAST. The Cytoplasmic segment spans residues 124-144; it reads DRYRSVQQPLRYLRYRTKTRA. Phosphothreonine is present on residues threonine 140 and threonine 142. A helical transmembrane segment spans residues 145–164; that stretch reads SATILGAWFFSFLWVIPILG. Residues 165-188 are Extracellular-facing; that stretch reads WHHFMPPAPELREDKCETDFYNVT. Residues 189-211 traverse the membrane as a helical segment; that stretch reads WFKIMTAIINFYLPTLLMLWFYV. Asparagine 198 is a histamine binding site. The Cytoplasmic portion of the chain corresponds to 212–415; that stretch reads KIYKAVRRHC…LNRERKAAKQ (204 aa). A Phosphoserine modification is found at serine 230. Basic and acidic residues predominate over residues 241–253; that stretch reads SDDTKEGAKKPGR. Disordered stretches follow at residues 241–295 and 310–379; these read SDDT…GERE and VAEG…RSGS. Phosphoserine is present on residues serine 342 and serine 345. Residues 347 to 365 are compositionally biased toward polar residues; the sequence is DQTLVDQQSFSRTTDSDTS. Residues serine 379, serine 381, serine 395, and serine 397 each carry the phosphoserine modification. Residues 416–439 traverse the membrane as a helical segment; it reads LGFIMAAFILCWIPYFIFFMVIAF. An important for agonist binding region spans residues 423 to 427; sequence FILCW. Residue tyrosine 430 participates in histamine binding. Cysteine 440 and cysteine 443 are disulfide-bonded. Topologically, residues 440–445 are extracellular; sequence CKSCCS. The helical transmembrane segment at 446–468 threads the bilayer; that stretch reads EPMHMFTIWLGYINSTLNPLIYP. Residues 469–486 lie on the Cytoplasmic side of the membrane; the sequence is LCNENFKKTFKKILHIRS.

It belongs to the G-protein coupled receptor 1 family. Post-translationally, phosphorylation at sites in the second and third cytoplasmic loops independently contribute to agonist-induced receptor down-regulation.

It is found in the cell membrane. G-protein-coupled receptor for histamine, a biogenic amine that functions as an immune modulator and a neurotransmitter. Through the H1 receptor, histamine mediates the contraction of smooth muscles and increases capillary permeability due to contraction of terminal venules. Also mediates neurotransmission in the central nervous system and thereby regulates circadian rhythms, emotional and locomotor activities as well as cognitive functions. The sequence is that of Histamine H1 receptor from Rattus norvegicus (Rat).